A 187-amino-acid chain; its full sequence is dCTP deaminase (187 aa).

DCTP contacts are provided by residues 110–115 (KSTYAR), 134–136 (TLE), glutamine 155, tyrosine 169, and glutamine 179. The Proton donor/acceptor role is filled by glutamate 136.

Belongs to the dCTP deaminase family. As to quaternary structure, homotrimer.

The enzyme catalyses dCTP + H2O + H(+) = dUTP + NH4(+). Its pathway is pyrimidine metabolism; dUMP biosynthesis; dUMP from dCTP (dUTP route): step 1/2. Catalyzes the deamination of dCTP to dUTP. This is dCTP deaminase from Bordetella pertussis (strain Tohama I / ATCC BAA-589 / NCTC 13251).